The chain runs to 166 residues: Large ribosomal subunit protein uL10 (166 aa).

Belongs to the universal ribosomal protein uL10 family. As to quaternary structure, part of the ribosomal stalk of the 50S ribosomal subunit. The N-terminus interacts with L11 and the large rRNA to form the base of the stalk. The C-terminus forms an elongated spine to which L12 dimers bind in a sequential fashion forming a multimeric L10(L12)X complex.

Forms part of the ribosomal stalk, playing a central role in the interaction of the ribosome with GTP-bound translation factors. The polypeptide is Large ribosomal subunit protein uL10 (Streptococcus pneumoniae serotype 19F (strain G54)).